The sequence spans 155 residues: 2-C-methyl-D-erythritol 2,4-cyclodiphosphate synthase (155 aa).

Asp-8 and His-10 together coordinate a divalent metal cation. Residues 8–10 (DVH) and 34–35 (HS) each bind 4-CDP-2-C-methyl-D-erythritol 2-phosphate. His-42 is a binding site for a divalent metal cation. Residues 56–58 (DIG), 61–65 (FPDSD), 100–106 (AQKPKML), 132–135 (TTEE), Phe-139, and Lys-142 each bind 4-CDP-2-C-methyl-D-erythritol 2-phosphate.

It belongs to the IspF family. As to quaternary structure, homotrimer. A divalent metal cation serves as cofactor.

The catalysed reaction is 4-CDP-2-C-methyl-D-erythritol 2-phosphate = 2-C-methyl-D-erythritol 2,4-cyclic diphosphate + CMP. Its pathway is isoprenoid biosynthesis; isopentenyl diphosphate biosynthesis via DXP pathway; isopentenyl diphosphate from 1-deoxy-D-xylulose 5-phosphate: step 4/6. In terms of biological role, involved in the biosynthesis of isopentenyl diphosphate (IPP) and dimethylallyl diphosphate (DMAPP), two major building blocks of isoprenoid compounds. Catalyzes the conversion of 4-diphosphocytidyl-2-C-methyl-D-erythritol 2-phosphate (CDP-ME2P) to 2-C-methyl-D-erythritol 2,4-cyclodiphosphate (ME-CPP) with a corresponding release of cytidine 5-monophosphate (CMP). The polypeptide is 2-C-methyl-D-erythritol 2,4-cyclodiphosphate synthase (Clostridium botulinum (strain 657 / Type Ba4)).